The sequence spans 733 residues: MATKFPKFSQALAQDPATRRIWYGIATAHDLEAHDGMTEENLYQKIFASHFGHLAVIFLWTAGNLFHVAWQGNFEQWVAKPLKVRPIAHSIWDPHFGESALKAFSKGNTYPVNIAFSGVYQWWYTIGFRTNQELYLGSVGLLLLSCALLFAGWLHLQPKFRPSLSWFKNNESRLNHHLSGLMGVSSLAWTGHLVHVALPASRGVHVGWDNFLTTPPHPAGLTPFFTGNWTVYAQNPDSPSHVYGTSEGAGTRILTFLGGFHPQTQSLWLSDIAHHQLAIAFVFIIAGHMYRTNFGIGHNMKEILDAHRPPGGRLGAGHVGLFETITNSLHIQLGLALACLGVATSLTAQHMYALTPYAYLSKDFTTEAALYTHHQYIAGFLMVGAFAHGAIFFVRDYDPELNKNNVLARMLEHKEAIISHLSWASLFLGFHVLGLYIHNDTVVAFGQPEKQILFEPLFAEYIQAASGKAVYNFNVLLSSSTNPATIAGNQVWLPGWLEAINNSKTDLFLKIGPGDFLVHHAIALGLHVTTLILVKGALDARGSKLMPDKKDFGYSFPCDGPGRGGTCDISAWDAFYLAMFWMLNTIGWVTFYWHWKHMTIWGGNPGQFDESSNYIMGWLRDYLWLNSSPLINGYNPFGMNNLSVWAWMFLFGHLIWATGFMFLISWRGYWQELIETLVWAHERTPLANLIRWRDKPVALSIVQARLVGLVHFAVGYILTYAAFVIASTSGKFA.

8 helical membrane passes run Ile-46 to Ala-69, Leu-134 to Gln-157, Leu-174 to Leu-198, Ile-272 to Tyr-290, Leu-329 to Tyr-352, Ala-368 to Val-394, Ala-416 to His-438, and Phe-516 to Val-534. [4Fe-4S] cluster contacts are provided by Cys-558 and Cys-567. 2 helical membrane passes run Ala-574–Trp-595 and Leu-642–Ile-664. Residues His-653, Met-661, and Tyr-669 each contribute to the chlorophyll a site. Trp-670 is a phylloquinone binding site. Residues Leu-706–Ala-726 traverse the membrane as a helical segment.

Belongs to the PsaA/PsaB family. In terms of assembly, the PsaA/B heterodimer binds the P700 chlorophyll special pair and subsequent electron acceptors. PSI consists of a core antenna complex that captures photons, and an electron transfer chain that converts photonic excitation into a charge separation. The eukaryotic PSI reaction center is composed of at least 11 subunits. P700 is a chlorophyll a/chlorophyll a' dimer, A0 is one or more chlorophyll a, A1 is one or both phylloquinones and FX is a shared 4Fe-4S iron-sulfur center. is required as a cofactor.

Its subcellular location is the plastid. It is found in the chloroplast thylakoid membrane. The catalysed reaction is reduced [plastocyanin] + hnu + oxidized [2Fe-2S]-[ferredoxin] = oxidized [plastocyanin] + reduced [2Fe-2S]-[ferredoxin]. Functionally, psaA and PsaB bind P700, the primary electron donor of photosystem I (PSI), as well as the electron acceptors A0, A1 and FX. PSI is a plastocyanin/cytochrome c6-ferredoxin oxidoreductase, converting photonic excitation into a charge separation, which transfers an electron from the donor P700 chlorophyll pair to the spectroscopically characterized acceptors A0, A1, FX, FA and FB in turn. Oxidized P700 is reduced on the lumenal side of the thylakoid membrane by plastocyanin or cytochrome c6. The polypeptide is Photosystem I P700 chlorophyll a apoprotein A2 (Trieres chinensis (Marine centric diatom)).